Reading from the N-terminus, the 429-residue chain is UDP-N-acetylglucosamine 1-carboxyvinyltransferase (429 aa).

22 to 23 (KN) contacts phosphoenolpyruvate. Arginine 102 lines the UDP-N-acetyl-alpha-D-glucosamine pocket. Cysteine 126 functions as the Proton donor in the catalytic mechanism. Cysteine 126 carries the 2-(S-cysteinyl)pyruvic acid O-phosphothioketal modification. Residues 131–135 (RPVDL), aspartate 316, and isoleucine 338 each bind UDP-N-acetyl-alpha-D-glucosamine.

Belongs to the EPSP synthase family. MurA subfamily.

The protein resides in the cytoplasm. It carries out the reaction phosphoenolpyruvate + UDP-N-acetyl-alpha-D-glucosamine = UDP-N-acetyl-3-O-(1-carboxyvinyl)-alpha-D-glucosamine + phosphate. Its pathway is cell wall biogenesis; peptidoglycan biosynthesis. Its function is as follows. Cell wall formation. Adds enolpyruvyl to UDP-N-acetylglucosamine. The sequence is that of UDP-N-acetylglucosamine 1-carboxyvinyltransferase from Methylocella silvestris (strain DSM 15510 / CIP 108128 / LMG 27833 / NCIMB 13906 / BL2).